The following is a 339-amino-acid chain: Ketol-acid reductoisomerase (NADP(+)) (339 aa).

The region spanning 1–182 (MRVYYDRDAD…GGGRAGIIET (182 aa)) is the KARI N-terminal Rossmann domain. NADP(+) contacts are provided by residues 24-27 (YGSQ), Arg-48, Ser-51, Thr-53, and 83-86 (DELQ). His-108 is an active-site residue. Gly-134 is an NADP(+) binding site. Positions 183–328 (TFREECETDL…AKLRAMMPWI (146 aa)) constitute a KARI C-terminal knotted domain. Mg(2+)-binding residues include Asp-191, Glu-195, Glu-227, and Glu-231. Ser-252 lines the substrate pocket.

Belongs to the ketol-acid reductoisomerase family. Mg(2+) serves as cofactor.

It catalyses the reaction (2R)-2,3-dihydroxy-3-methylbutanoate + NADP(+) = (2S)-2-acetolactate + NADPH + H(+). It carries out the reaction (2R,3R)-2,3-dihydroxy-3-methylpentanoate + NADP(+) = (S)-2-ethyl-2-hydroxy-3-oxobutanoate + NADPH + H(+). The protein operates within amino-acid biosynthesis; L-isoleucine biosynthesis; L-isoleucine from 2-oxobutanoate: step 2/4. It participates in amino-acid biosynthesis; L-valine biosynthesis; L-valine from pyruvate: step 2/4. Functionally, involved in the biosynthesis of branched-chain amino acids (BCAA). Catalyzes an alkyl-migration followed by a ketol-acid reduction of (S)-2-acetolactate (S2AL) to yield (R)-2,3-dihydroxy-isovalerate. In the isomerase reaction, S2AL is rearranged via a Mg-dependent methyl migration to produce 3-hydroxy-3-methyl-2-ketobutyrate (HMKB). In the reductase reaction, this 2-ketoacid undergoes a metal-dependent reduction by NADPH to yield (R)-2,3-dihydroxy-isovalerate. The polypeptide is Ketol-acid reductoisomerase (NADP(+)) (Methylocella silvestris (strain DSM 15510 / CIP 108128 / LMG 27833 / NCIMB 13906 / BL2)).